The chain runs to 267 residues: Lyso-ornithine lipid O-acyltransferase (267 aa).

The chain crosses the membrane as a helical span at residues 7–27 (IFLVVAAMVALSLSLIPFQYL).

Belongs to the 1-acyl-sn-glycerol-3-phosphate acyltransferase family. OlsA subfamily.

It localises to the membrane. It carries out the reaction a lyso-ornithine lipid + a fatty acyl-[ACP] = an N(2)-[(3R)-3-(acyloxy)acyl]-L-ornithine lipid + holo-[ACP]. Its pathway is lipid metabolism. Functionally, catalyzes the second step in the formation of ornithine lipids, which are phosphorus-free membrane lipids. Uses acyl-acyl carrier protein (acyl-AcpP) as an acyl donor and converts lyso-ornithine lipid (LOL) into ornithine lipid (OL). The polypeptide is Lyso-ornithine lipid O-acyltransferase (Brucella abortus (strain 2308)).